We begin with the raw amino-acid sequence, 202 residues long: uncharacterized protein (202 aa).

Belongs to the dienelactone hydrolase family.

This is an uncharacterized protein from Bacillus subtilis (strain 168).